We begin with the raw amino-acid sequence, 161 residues long: Lipoprotein signal peptidase (161 aa).

Helical transmembrane passes span 8 to 28, 40 to 60, 67 to 87, and 91 to 111; these read LKYF…KYLA, ITSF…SLLS, QMIM…YLII, and ITEK…LGNF. Active-site residues include D122 and D140. A helical transmembrane segment spans residues 136–156; it reads FNIADSAITCGVVILIAASLF.

The protein belongs to the peptidase A8 family.

The protein localises to the cell inner membrane. It carries out the reaction Release of signal peptides from bacterial membrane prolipoproteins. Hydrolyzes -Xaa-Yaa-Zaa-|-(S,diacylglyceryl)Cys-, in which Xaa is hydrophobic (preferably Leu), and Yaa (Ala or Ser) and Zaa (Gly or Ala) have small, neutral side chains.. The protein operates within protein modification; lipoprotein biosynthesis (signal peptide cleavage). This protein specifically catalyzes the removal of signal peptides from prolipoproteins. The chain is Lipoprotein signal peptidase from Francisella tularensis subsp. tularensis (strain FSC 198).